The sequence spans 177 residues: Large ribosomal subunit protein uL6 (177 aa).

The protein belongs to the universal ribosomal protein uL6 family. As to quaternary structure, part of the 50S ribosomal subunit.

In terms of biological role, this protein binds to the 23S rRNA, and is important in its secondary structure. It is located near the subunit interface in the base of the L7/L12 stalk, and near the tRNA binding site of the peptidyltransferase center. The sequence is that of Large ribosomal subunit protein uL6 from Novosphingobium aromaticivorans (strain ATCC 700278 / DSM 12444 / CCUG 56034 / CIP 105152 / NBRC 16084 / F199).